A 1366-amino-acid polypeptide reads, in one-letter code: Protein HUA2-LIKE 2 (1366 aa).

The PWWP domain maps to 24–81 (VGDLVLAKVKGFPAWPAVVSEPEKWDASPDSKKVFVHFFGTQQIAFCNPGDVEAFTEE). A compositionally biased stretch (basic and acidic residues) spans 111–124 (LKQQERASDPKSAE). 5 disordered regions span residues 111–138 (LKQQ…TLMP), 203–319 (TYSS…SGSK), 384–403 (NVQT…CEEN), 427–451 (EANS…AQTS), and 787–808 (SESA…TGEK). Residues 213–252 (VRSQNCAPQNETCPVQRSKSPSRLQTEKLQSSMLQNSDGG) are compositionally biased toward polar residues. Positions 391-403 (SHEKFTERPCEEN) are enriched in basic and acidic residues. Residues 787 to 803 (SESANDMQNNSSGSPNI) are compositionally biased toward polar residues. A CID domain is found at 836-977 (DVQSTRESYE…HHIRELDSHS (142 aa)). Disordered regions lie at residues 1027-1076 (LKDE…TAER) and 1128-1366 (TSHQ…QRSD). Over residues 1032 to 1052 (GGSDSEGGCDSEGGSDSDGGD) the composition is skewed to acidic residues. Residues 1057 to 1066 (TPEHESRILE) are compositionally biased toward basic and acidic residues. A compositionally biased stretch (pro residues) spans 1138–1152 (PPLPSSSPPPPPAPP). The span at 1191-1223 (LSGSTMHYQGPESSYISGVQLTNSIPQADGSNF) shows a compositional bias: polar residues. The span at 1229–1244 (PSHPHPHPPPPPPPPQ) shows a compositional bias: pro residues. Composition is skewed to basic and acidic residues over residues 1251 to 1262 (EPGHVLKSHRDA) and 1275 to 1298 (CDER…RDNW). A compositionally biased stretch (low complexity) spans 1299 to 1309 (RYPPSSSYGSR).

As to expression, expressed throughout young primordia, and vegetative and reproductive apices.

Its subcellular location is the nucleus. Probable transcription factor that acts with partial redundancy with HULK1 and HULK3. Plays diverse and essential roles in the control of plant development, physiology and flowering time. The protein is Protein HUA2-LIKE 2 of Arabidopsis thaliana (Mouse-ear cress).